The primary structure comprises 144 residues: Large ribosomal subunit protein uL15 (144 aa).

Residues 1 to 58 form a disordered region; it reads MRLNTLSPAAGSKPSKKRVGRGIGSGLGKTGGRGHKGQKSRSGGSVRPGFEGGQMPLK. Residues 21-31 show a composition bias toward gly residues; sequence RGIGSGLGKTG.

Belongs to the universal ribosomal protein uL15 family. In terms of assembly, part of the 50S ribosomal subunit.

Functionally, binds to the 23S rRNA. The sequence is that of Large ribosomal subunit protein uL15 from Vibrio atlanticus (strain LGP32) (Vibrio splendidus (strain Mel32)).